The following is a 692-amino-acid chain: Sodium- and chloride-dependent glycine transporter 1 (692 aa).

Residues 1 to 34 (MIGGDTRAASAHPGMASAQGPVATPSPEQPFPGT) are disordered. Residues 1–94 (MIGGDTRAAS…TRGNWGNQIE (94 aa)) are Cytoplasmic-facing. A run of 3 helical transmembrane segments spans residues 95 to 115 (FVLT…FPYL), 122 to 142 (GAFM…LFFM), and 174 to 194 (VSTY…YYFF). The Extracellular portion of the chain corresponds to 195 to 271 (SSMTHVLPWA…LSDDIGNFGE (77 aa)). The next 9 helical transmembrane spans lie at 272–292 (VRLP…LCLI), 301–321 (VVYF…VRGV), 346–366 (VWGD…GGLI), 393–413 (SVYA…HLGV), 436–456 (LLPI…LLGL), 492–512 (VAGF…WLLL), 516–536 (YAAS…IMYI), 556–576 (LFFQ…ILIF), and 596–616 (VAIG…YALF). The Cytoplasmic portion of the chain corresponds to 617-692 (QLCRTDGDTL…GSSRFQDSRI (76 aa)). T657 is subject to Phosphothreonine. S659 and S684 each carry phosphoserine. An essential for interaction with EXOC1 region spans residues 681–692 (SNGSSRFQDSRI).

This sequence belongs to the sodium:neurotransmitter symporter (SNF) (TC 2.A.22) family. SLC6A9 subfamily. In terms of assembly, interacts with EXOC1; interaction increases the transporter capacity of SLC6A9 probably by promoting its insertion into the cell membrane. Interacts with EXOC3 and EXOC4. In terms of tissue distribution, expressed in the brain (at protein level). At 11 dpc, expressed in the ventral part of the ventricular zone. At 15 dpc, also expressed in adjacent mantle tissue and the meninges. Strongly expressed in 12 dpc and 15 dpc liver. As to expression, expressed in the brain.

It is found in the cell membrane. It carries out the reaction glycine(out) + chloride(out) + 2 Na(+)(out) = glycine(in) + chloride(in) + 2 Na(+)(in). Sodium- and chloride-dependent glycine transporter which is essential for regulating glycine concentrations at inhibitory glycinergic synapses. Functionally, sodium- and chloride-dependent glycine transporter. The polypeptide is Sodium- and chloride-dependent glycine transporter 1 (Slc6a9) (Mus musculus (Mouse)).